The primary structure comprises 57 residues: UPF0391 membrane protein XOO1885 (57 aa).

2 helical membrane passes run 4–24 (WAII…GGMA) and 33–53 (FLFW…MTIA).

This sequence belongs to the UPF0391 family.

Its subcellular location is the cell membrane. The protein is UPF0391 membrane protein XOO1885 of Xanthomonas oryzae pv. oryzae (strain KACC10331 / KXO85).